Reading from the N-terminus, the 341-residue chain is Methionine import ATP-binding protein MetN 2 (341 aa).

One can recognise an ABC transporter domain in the interval 2 to 241 (IELKEVVKEY…PQHTVTKRFV (240 aa)). 38–45 (GFSGAGKS) contributes to the ATP binding site.

This sequence belongs to the ABC transporter superfamily. Methionine importer (TC 3.A.1.24) family. As to quaternary structure, the complex is composed of two ATP-binding proteins (MetN), two transmembrane proteins (MetI) and a solute-binding protein (MetQ).

Its subcellular location is the cell membrane. It catalyses the reaction L-methionine(out) + ATP + H2O = L-methionine(in) + ADP + phosphate + H(+). The enzyme catalyses D-methionine(out) + ATP + H2O = D-methionine(in) + ADP + phosphate + H(+). Functionally, part of the ABC transporter complex MetNIQ involved in methionine import. Responsible for energy coupling to the transport system. This chain is Methionine import ATP-binding protein MetN 2, found in Staphylococcus aureus (strain N315).